Here is a 539-residue protein sequence, read N- to C-terminus: Dihydrolipoyllysine-residue acetyltransferase component 2 of pyruvate dehydrogenase complex, mitochondrial (539 aa).

A mitochondrion-targeting transit peptide spans 1-102 (MASRIINHSK…SSQMRSVRGF (102 aa)). The tract at residues 102 to 122 (FSSSSDLPPHQEIGMPSLSPT) is disordered. The Lipoyl-binding domain maps to 111 to 187 (HQEIGMPSLS…QVGEVIAITV (77 aa)). N6-lipoyllysine is present on K152. Residues 196–244 (FKDYTPSSDTGPAAPEAKPAPSLPKEEKVEKPASAPEAKISKPSSAPSE) form a disordered region. In terms of domain architecture, Peripheral subunit-binding (PSBD) spans 248–285 (FASPLARKLAEDNNVPLSSIKGTGPEGRIVKADVEDFL). Active-site residues include H512 and D516.

This sequence belongs to the 2-oxoacid dehydrogenase family. (R)-lipoate serves as cofactor.

It localises to the mitochondrion matrix. The enzyme catalyses N(6)-[(R)-dihydrolipoyl]-L-lysyl-[protein] + acetyl-CoA = N(6)-[(R)-S(8)-acetyldihydrolipoyl]-L-lysyl-[protein] + CoA. Its function is as follows. The pyruvate dehydrogenase complex catalyzes the overall conversion of pyruvate to acetyl-CoA and CO(2). It contains multiple copies of three enzymatic components: pyruvate dehydrogenase (E1), dihydrolipoamide acetyltransferase (E2) and lipoamide dehydrogenase (E3). In Arabidopsis thaliana (Mouse-ear cress), this protein is Dihydrolipoyllysine-residue acetyltransferase component 2 of pyruvate dehydrogenase complex, mitochondrial.